Here is a 429-residue protein sequence, read N- to C-terminus: Putative pentatricopeptide repeat-containing protein At1g03510 (429 aa).

10 PPR repeats span residues 11–45 (KLISLTKQLSSYANQGNHEQALNLFLQMHSSFALP), 47–81 (DAHVFSLALKSCAAAFRPVLGGSVHAHSVKSNFLS), 82–112 (NPFVGCALLDMYGKCLSVSHARKLFDEIPQR), 113–147 (NAVVWNAMISHYTHCGKVKEAVELYEAMDVMPNES), 148–180 (SFNAIIKGLVGTEDGSYRAIEFYRKMIEFRFKP), 181–215 (NLITLLALVSACSAIGAFRLIKEIHSYAFRNLIEP), 216–246 (HPQLKSGLVEAYGRCGSIVYVQLVFDSMEDR), 247–281 (DVVAWSSLISAYALHGDAESALKTFQEMELAKVTP), 282–312 (DDIAFLNVLKACSHAGLADEALVYFKRMQGD), and 318–348 (SKDHYSCLVDVLSRVGRFEEAYKVIQAMPEK). A type E motif region spans residues 353–428 (TWGALLGACR…SPGSSWCLFK (76 aa)).

Belongs to the PPR family. PCMP-E subfamily.

This Arabidopsis thaliana (Mouse-ear cress) protein is Putative pentatricopeptide repeat-containing protein At1g03510 (PCMP-E3).